Reading from the N-terminus, the 105-residue chain is Iron-sulfur cluster assembly protein CyaY (105 aa).

It belongs to the frataxin family.

Its function is as follows. Involved in iron-sulfur (Fe-S) cluster assembly. May act as a regulator of Fe-S biogenesis. This chain is Iron-sulfur cluster assembly protein CyaY, found in Dechloromonas aromatica (strain RCB).